We begin with the raw amino-acid sequence, 243 residues long: R-spondin-2 (243 aa).

The signal sequence occupies residues 1-21 (MQFQLFSFVLIILNCVDYSHC). Disulfide bonds link C40–C46, C43–C52, C55–C74, C78–C93, C96–C104, C101–C110, C113–C124, C128–C141, C145–C187, C156–C163, and C196–C203. Residues 90–134 (MNRCSRCRIENCDSCFSRDFCIKCKSGFYSHKGQCFEECPEGFAP) form an FU repeat. The TSP type-1 domain occupies 144-204 (GCEVGPWSEW…RCKMAMRHCP (61 aa)). N-linked (GlcNAc...) asparagine glycosylation is present at N160. The interval 202 to 243 (HCPGGTRTTKKKDKKNKKKKKKLLERAQEQHSVVLATDRSSQ) is disordered. A compositionally biased stretch (basic residues) spans 209 to 224 (TTKKKDKKNKKKKKKL).

This sequence belongs to the R-spondin family. In terms of assembly, binds heparin.

It localises to the secreted. Activator of the canonical Wnt signaling pathway by acting as a ligand for lgr4-6 receptors. Upon binding to lgr4-6 (lgr4, lgr5 or lgr6), lgr4-6 associate with phosphorylated lrp6 and frizzled receptors that are activated by extracellular Wnt receptors, triggering the canonical Wnt signaling pathway to increase expression of target genes. Acts both in the canonical. Wnt/beta-catenin-dependent pathway and in non-canonical Wnt signaling pathway. Activates neural markers and promotes muscle formation. Overexpression blocks activin, nodal and BMP4 signaling, suggesting that it may negatively regulate the TGF-beta pathway. During embryonic development, plays a crucial role in limb specification, amplifying the Wnt signaling pathway independently of LGR4-6 receptors, possibly by acting as a direct antagonistic ligand to RNF43 and ZNRF3, hence governing the number of limbs an embryo should form. The protein is R-spondin-2 (rspo2) of Xenopus tropicalis (Western clawed frog).